We begin with the raw amino-acid sequence, 465 residues long: Argininosuccinate lyase (465 aa).

This sequence belongs to the lyase 1 family. Argininosuccinate lyase subfamily.

It is found in the cytoplasm. The catalysed reaction is 2-(N(omega)-L-arginino)succinate = fumarate + L-arginine. It functions in the pathway amino-acid biosynthesis; L-arginine biosynthesis; L-arginine from L-ornithine and carbamoyl phosphate: step 3/3. This chain is Argininosuccinate lyase, found in Variovorax paradoxus (strain S110).